A 259-amino-acid chain; its full sequence is Taurine import ATP-binding protein TauB (259 aa).

In terms of domain architecture, ABC transporter spans 4 to 233 (LELERISAQY…RYAAGESARA (230 aa)). ATP is bound at residue 38-45 (GPSGSGKT).

The protein belongs to the ABC transporter superfamily. Taurine importer (TC 3.A.1.17.1) family. The complex is composed of two ATP-binding proteins (TauB), two transmembrane proteins (TauC) and a solute-binding protein (TauA).

It is found in the cell inner membrane. It carries out the reaction taurine(out) + ATP + H2O = taurine(in) + ADP + phosphate + H(+). Functionally, part of the ABC transporter complex TauABC involved in taurine import. Responsible for energy coupling to the transport system. The sequence is that of Taurine import ATP-binding protein TauB from Pseudomonas entomophila (strain L48).